The chain runs to 341 residues: MADEKPSNGVLVHMVKLLIKTFLDGIFDDLMENNVLNTDEIHLIGKCLKFVVSNAENLVDDITETAQIAGKIFREHLWNSKKQLSSDISSDGEREANMPGLNIRNKEFNYLHNRNGSELDLLGMRDLLENLGYSVVIKENLTAQEMETALRQFAAHPEHQSSDSTFLVFMSHSILNGICGTKHWDQEPDVLHDDTIFEIFNNRNCQSLKDKPKVIIMQACRGNGAGIVWFTTDSGKASADTHGRLLQGNICNDAVTKAHVEKDFIAFKSSTPHNVSWRHETNGSVFISQIIYYFREYSWSHHLEEIFQKVQHSFETPNILTQLPTIERLSMTRYFYLFPGN.

Residues Met-1–Gly-92 enclose the CARD domain. Phosphoserine occurs at positions 85 and 90. Active-site residues include His-172 and Cys-220.

This sequence belongs to the peptidase C14A family. In terms of tissue distribution, widely expressed, with highest levels in lung.

May function as a negative regulator of inflammatory responses and innate immunity. May reduce cytokine release in response to bacterial lipopolysaccharide during infection. Reduces activation of NF-kappa-B in response to TNF. May lack protease activity. The protein is Inactive caspase-12 (CASP12) of Homo sapiens (Human).